The following is a 195-amino-acid chain: NADH-quinone oxidoreductase subunit B (195 aa).

Positions 74, 75, 139, and 169 each coordinate [4Fe-4S] cluster.

Belongs to the complex I 20 kDa subunit family. NDH-1 is composed of 14 different subunits. Subunits NuoB, C, D, E, F, and G constitute the peripheral sector of the complex. Requires [4Fe-4S] cluster as cofactor.

It is found in the cell inner membrane. It carries out the reaction a quinone + NADH + 5 H(+)(in) = a quinol + NAD(+) + 4 H(+)(out). Its function is as follows. NDH-1 shuttles electrons from NADH, via FMN and iron-sulfur (Fe-S) centers, to quinones in the respiratory chain. The immediate electron acceptor for the enzyme in this species is believed to be ubiquinone. Couples the redox reaction to proton translocation (for every two electrons transferred, four hydrogen ions are translocated across the cytoplasmic membrane), and thus conserves the redox energy in a proton gradient. The polypeptide is NADH-quinone oxidoreductase subunit B (Methylorubrum extorquens (strain PA1) (Methylobacterium extorquens)).